The chain runs to 150 residues: Small ribosomal subunit protein uS11 (150 aa).

Positions 126-150 (GRIEDVTPTPSDSTRRKGGRRGRRL) are disordered. The segment covering 141–150 (RKGGRRGRRL) has biased composition (basic residues).

It belongs to the universal ribosomal protein uS11 family. Component of the small ribosomal subunit (SSU). Mature N.crassa ribosomes consist of a small (40S) and a large (60S) subunit. The 40S small subunit contains 1 molecule of ribosomal RNA (18S rRNA) and at least 32 different proteins. The large 60S subunit contains 3 rRNA molecules (26S, 5.8S and 5S rRNA) and at least 42 different proteins.

It localises to the cytoplasm. Component of the ribosome, a large ribonucleoprotein complex responsible for the synthesis of proteins in the cell. The small ribosomal subunit (SSU) binds messenger RNAs (mRNAs) and translates the encoded message by selecting cognate aminoacyl-transfer RNA (tRNA) molecules. The large subunit (LSU) contains the ribosomal catalytic site termed the peptidyl transferase center (PTC), which catalyzes the formation of peptide bonds, thereby polymerizing the amino acids delivered by tRNAs into a polypeptide chain. The nascent polypeptides leave the ribosome through a tunnel in the LSU and interact with protein factors that function in enzymatic processing, targeting, and the membrane insertion of nascent chains at the exit of the ribosomal tunnel. uS11 is involved in nucleolar processing of pre-18S ribosomal RNA and ribosome assembly. This chain is Small ribosomal subunit protein uS11 (rps-14), found in Neurospora crassa (strain ATCC 24698 / 74-OR23-1A / CBS 708.71 / DSM 1257 / FGSC 987).